The chain runs to 360 residues: Photosystem II protein D1 2 (360 aa).

The next 3 helical transmembrane spans lie at 29-46 (YVGWFGVLMIPTLLTATI), 118-133 (HFLIGVFCYMGREWEL), and 142-156 (WICVAYSAPVAAATA). H118 contributes to the chlorophyll a binding site. Position 126 (Y126) interacts with pheophytin a. [CaMn4O5] cluster is bound by residues D170 and E189. Residues 197 to 218 (FHMLGVAGVFGGSLFSAMHGSL) form a helical membrane-spanning segment. Position 198 (H198) interacts with chlorophyll a. Residues H215 and 264–265 (SF) each bind a quinone. H215 is a binding site for Fe cation. H272 contributes to the Fe cation binding site. Residues 274 to 288 (FLAAWPVVGIWFTSL) form a helical membrane-spanning segment. [CaMn4O5] cluster contacts are provided by H332, E333, D342, and A344. The propeptide occupies 345–360 (AGEATPVALTAPAING).

It belongs to the reaction center PufL/M/PsbA/D family. In terms of assembly, PSII is composed of 1 copy each of membrane proteins PsbA, PsbB, PsbC, PsbD, PsbE, PsbF, PsbH, PsbI, PsbJ, PsbK, PsbL, PsbM, PsbT, PsbX, PsbY, PsbZ, Psb30/Ycf12, peripheral proteins PsbO, CyanoQ (PsbQ), PsbU, PsbV and a large number of cofactors. It forms dimeric complexes. Requires The D1/D2 heterodimer binds P680, chlorophylls that are the primary electron donor of PSII, and subsequent electron acceptors. It shares a non-heme iron and each subunit binds pheophytin, quinone, additional chlorophylls, carotenoids and lipids. D1 provides most of the ligands for the Mn4-Ca-O5 cluster of the oxygen-evolving complex (OEC). There is also a Cl(-1) ion associated with D1 and D2, which is required for oxygen evolution. The PSII complex binds additional chlorophylls, carotenoids and specific lipids. as cofactor. In terms of processing, tyr-161 forms a radical intermediate that is referred to as redox-active TyrZ, YZ or Y-Z. C-terminally processed by CtpA; processing is essential to allow assembly of the oxygen-evolving complex and thus photosynthetic growth.

It localises to the cellular thylakoid membrane. The catalysed reaction is 2 a plastoquinone + 4 hnu + 2 H2O = 2 a plastoquinol + O2. Its function is as follows. Photosystem II (PSII) is a light-driven water:plastoquinone oxidoreductase that uses light energy to abstract electrons from H(2)O, generating O(2) and a proton gradient subsequently used for ATP formation. It consists of a core antenna complex that captures photons, and an electron transfer chain that converts photonic excitation into a charge separation. The D1/D2 (PsbA/PsbD) reaction center heterodimer binds P680, the primary electron donor of PSII as well as several subsequent electron acceptors. The polypeptide is Photosystem II protein D1 2 (Synechococcus elongatus (strain ATCC 33912 / PCC 7942 / FACHB-805) (Anacystis nidulans R2)).